A 368-amino-acid polypeptide reads, in one-letter code: Quinolinate synthase (368 aa).

The iminosuccinate site is built by His-46 and Ser-63. A [4Fe-4S] cluster-binding site is contributed by Cys-110. Iminosuccinate-binding positions include 141-143 and Ser-162; that span reads YVN. Cys-230 provides a ligand contact to [4Fe-4S] cluster. Iminosuccinate is bound by residues 256–258 and Thr-273; that span reads HPE. A [4Fe-4S] cluster-binding site is contributed by Cys-320.

This sequence belongs to the quinolinate synthase family. Type 3 subfamily. The cofactor is [4Fe-4S] cluster.

It is found in the cytoplasm. It catalyses the reaction iminosuccinate + dihydroxyacetone phosphate = quinolinate + phosphate + 2 H2O + H(+). Its pathway is cofactor biosynthesis; NAD(+) biosynthesis; quinolinate from iminoaspartate: step 1/1. Catalyzes the condensation of iminoaspartate with dihydroxyacetone phosphate to form quinolinate. The protein is Quinolinate synthase of Bacillus mycoides (strain KBAB4) (Bacillus weihenstephanensis).